The following is a 61-amino-acid chain: Small ribosomal subunit protein uS14B (61 aa).

The Zn(2+) site is built by cysteine 24, cysteine 27, cysteine 40, and cysteine 43.

Belongs to the universal ribosomal protein uS14 family. Zinc-binding uS14 subfamily. In terms of assembly, part of the 30S ribosomal subunit. Contacts proteins S3 and S10. The cofactor is Zn(2+).

In terms of biological role, binds 16S rRNA, required for the assembly of 30S particles and may also be responsible for determining the conformation of the 16S rRNA at the A site. This is Small ribosomal subunit protein uS14B from Mycobacteroides abscessus (strain ATCC 19977 / DSM 44196 / CCUG 20993 / CIP 104536 / JCM 13569 / NCTC 13031 / TMC 1543 / L948) (Mycobacterium abscessus).